Here is a 32-residue protein sequence, read N- to C-terminus: Phallacidin proprotein (32 aa).

Residues 1 to 10 (MSDINATRLP) constitute a propeptide that is removed on maturation. Residues 11–17 (AWLVDCP) constitute a cross-link (cyclopeptide (Ala-Pro)). A cross-link (2'-cysteinyl-6'-hydroxytryptophan sulfoxide (Trp-Cys)) is located at residues 12-16 (WLVDC). Residues 18–32 (CVGDDINRLLTRGEK) constitute a propeptide that is removed on maturation.

Belongs to the MSDIN fungal toxin family. Post-translationally, processed by the macrocyclase-peptidase enzyme POPB to yield a toxic cyclic heptapeptide. POPB first removes 10 residues from the N-terminus. Conformational trapping of the remaining peptide forces the enzyme to release this intermediate rather than proceed to macrocyclization. The enzyme rebinds the remaining peptide in a different conformation and catalyzes macrocyclization of the N-terminal 7 residues.

In terms of biological role, major toxin that belongs to the bicyclic heptapeptides called phallotoxins. Although structurally related to amatoxins, phallotoxins have a different mode of action, which is the stabilization of F-actin. Phallotoxins are poisonous when administered parenterally, but not orally because of poor absorption. This chain is Phallacidin proprotein, found in Amanita pallidorosea.